We begin with the raw amino-acid sequence, 317 residues long: Serpentine receptor class delta-44 (317 aa).

The next 6 membrane-spanning stretches (helical) occupy residues 5–25 (ILSV…IILI), 90–110 (MFHI…LTTF), 130–150 (ILFI…LVII), 185–205 (RVNG…CLLL), 235–255 (IFGH…SLIT), and 264–284 (FFIF…TMYF).

This sequence belongs to the nematode receptor-like protein srd family.

The protein resides in the membrane. This Caenorhabditis elegans protein is Serpentine receptor class delta-44 (srd-44).